Here is a 380-residue protein sequence, read N- to C-terminus: uncharacterized protein (380 aa).

The region spanning Leu287–Gly318 is the 4Fe-4S ferredoxin-type domain.

This is an uncharacterized protein from Methanocaldococcus jannaschii (strain ATCC 43067 / DSM 2661 / JAL-1 / JCM 10045 / NBRC 100440) (Methanococcus jannaschii).